Consider the following 262-residue polypeptide: Ribose-5-phosphate isomerase A (262 aa).

Substrate-binding positions include 33-36, 89-92, and 102-105; these read TGST, DGAD, and KGGG. The Proton acceptor role is filled by glutamate 111. Lysine 129 provides a ligand contact to substrate.

The protein belongs to the ribose 5-phosphate isomerase family. In terms of assembly, homodimer.

It carries out the reaction aldehydo-D-ribose 5-phosphate = D-ribulose 5-phosphate. The protein operates within carbohydrate degradation; pentose phosphate pathway; D-ribose 5-phosphate from D-ribulose 5-phosphate (non-oxidative stage): step 1/1. Functionally, catalyzes the reversible conversion of ribose-5-phosphate to ribulose 5-phosphate. This chain is Ribose-5-phosphate isomerase A, found in Ruegeria pomeroyi (strain ATCC 700808 / DSM 15171 / DSS-3) (Silicibacter pomeroyi).